The sequence spans 286 residues: Beta-lactamase SHV-5 (286 aa).

Residues methionine 1–alanine 21 form the signal peptide. Serine 66 acts as the Acyl-ester intermediate in catalysis. Cysteine 73 and cysteine 119 are oxidised to a cystine. Glutamate 164 functions as the Proton acceptor in the catalytic mechanism. Lysine 230 to glycine 232 contributes to the substrate binding site.

Belongs to the class-A beta-lactamase family.

The catalysed reaction is a beta-lactam + H2O = a substituted beta-amino acid. SHV enzymes hydrolyze broad spectrum cephalosporins notably cefotaxime and ceftazidime. SHV-5 causes particularly high levels of resistance to aztreonam and ceftazidime. This chain is Beta-lactamase SHV-5 (bla), found in Klebsiella pneumoniae.